Reading from the N-terminus, the 208-residue chain is Uracil phosphoribosyltransferase (208 aa).

Residues Arg78, Arg103, and 130-138 (DPMLATGGS) contribute to the 5-phospho-alpha-D-ribose 1-diphosphate site. Uracil-binding positions include Ile193 and 198-200 (GDA). Residue Asp199 coordinates 5-phospho-alpha-D-ribose 1-diphosphate.

It belongs to the UPRTase family. Requires Mg(2+) as cofactor.

It catalyses the reaction UMP + diphosphate = 5-phospho-alpha-D-ribose 1-diphosphate + uracil. It functions in the pathway pyrimidine metabolism; UMP biosynthesis via salvage pathway; UMP from uracil: step 1/1. With respect to regulation, allosterically activated by GTP. Catalyzes the conversion of uracil and 5-phospho-alpha-D-ribose 1-diphosphate (PRPP) to UMP and diphosphate. This chain is Uracil phosphoribosyltransferase, found in Yersinia enterocolitica serotype O:8 / biotype 1B (strain NCTC 13174 / 8081).